A 266-amino-acid polypeptide reads, in one-letter code: Zinc transporter ZupT (266 aa).

The next 8 helical transmembrane spans lie at Leu-8–Val-28, Phe-35–Leu-55, Gln-70–Ile-90, Gly-123–Phe-143, Gly-152–Val-172, Phe-185–Ile-205, Trp-209–Ile-229, and Leu-246–Ala-266. Positions 134 and 137 each coordinate Fe(2+). Glu-137 and His-162 together coordinate Zn(2+). The Fe(2+) site is built by Asn-163, Glu-166, and Glu-195. Glu-166 serves as a coordination point for Zn(2+).

The protein belongs to the ZIP transporter (TC 2.A.5) family. ZupT subfamily.

The protein localises to the cell membrane. It catalyses the reaction Zn(2+)(in) = Zn(2+)(out). Its function is as follows. Mediates zinc uptake. May also transport other divalent cations. This Chlorobium phaeovibrioides (strain DSM 265 / 1930) (Prosthecochloris vibrioformis (strain DSM 265)) protein is Zinc transporter ZupT.